We begin with the raw amino-acid sequence, 147 residues long: Transthyretin (147 aa).

The first 20 residues, 1-20, serve as a signal peptide directing secretion; the sequence is MASHRLLLLCLAGLVFVSEA. Residue Cys-30 is modified to Sulfocysteine. Lys-35 is a binding site for L-thyroxine. Glu-62 is modified (4-carboxyglutamate). The residue at position 72 (Ser-72) is a Phosphoserine. L-thyroxine is bound at residue Glu-74. N-linked (GlcNAc...) asparagine glycosylation is present at Asn-118. Ser-137 contacts L-thyroxine.

Belongs to the transthyretin family. Homotetramer. Dimer of dimers. In the homotetramer, subunits assemble around a central channel that can accommodate two ligand molecules. Interacts with RBP4. Post-translationally, sulfonation of the reactive cysteine Cys-30 enhances the stability of the native conformation of TTR, avoiding misassembly of the protein leading to amyloid formation. As to expression, detected in brain.

The protein localises to the secreted. Thyroid hormone-binding protein. Probably transports thyroxine from the bloodstream to the brain. The sequence is that of Transthyretin (TTR) from Pan troglodytes (Chimpanzee).